A 365-amino-acid chain; its full sequence is Ribosomal RNA large subunit methyltransferase F (365 aa).

The interval 1-50 (MSKPAVKSVPSATAKTATRAVNIRQKVKAPKQAKPEAKGRAKPSKDKPRA) is disordered. Over residues 33-50 (AKPEAKGRAKPSKDKPRA) the composition is skewed to basic and acidic residues.

It belongs to the methyltransferase superfamily. METTL16/RlmF family.

The protein localises to the cytoplasm. The catalysed reaction is adenosine(1618) in 23S rRNA + S-adenosyl-L-methionine = N(6)-methyladenosine(1618) in 23S rRNA + S-adenosyl-L-homocysteine + H(+). In terms of biological role, specifically methylates the adenine in position 1618 of 23S rRNA. The protein is Ribosomal RNA large subunit methyltransferase F of Shewanella baltica (strain OS155 / ATCC BAA-1091).